A 104-amino-acid chain; its full sequence is Protein RnfH (104 aa).

It belongs to the UPF0125 (RnfH) family.

In Pseudomonas syringae pv. syringae (strain B728a), this protein is Protein RnfH.